The following is a 429-amino-acid chain: Adenylosuccinate synthetase (429 aa).

GTP is bound by residues 12–18 and 40–42; these read GDEGKGK and GHT. Catalysis depends on Asp13, which acts as the Proton acceptor. Residues Asp13 and Gly40 each contribute to the Mg(2+) site. IMP contacts are provided by residues 13-16, 38-41, Thr129, Arg143, Gln223, Thr238, and Arg302; these read DEGK and NAGH. His41 serves as the catalytic Proton donor. 298–304 serves as a coordination point for substrate; that stretch reads TVTGRPR. GTP-binding positions include Arg304, 330 to 332, and 412 to 414; these read KLD and STS.

It belongs to the adenylosuccinate synthetase family. In terms of assembly, homodimer. It depends on Mg(2+) as a cofactor.

It localises to the cytoplasm. The catalysed reaction is IMP + L-aspartate + GTP = N(6)-(1,2-dicarboxyethyl)-AMP + GDP + phosphate + 2 H(+). It participates in purine metabolism; AMP biosynthesis via de novo pathway; AMP from IMP: step 1/2. Plays an important role in the de novo pathway of purine nucleotide biosynthesis. Catalyzes the first committed step in the biosynthesis of AMP from IMP. This Paramagnetospirillum magneticum (strain ATCC 700264 / AMB-1) (Magnetospirillum magneticum) protein is Adenylosuccinate synthetase.